The following is a 376-amino-acid chain: Flagellar P-ring protein (376 aa).

The signal sequence occupies residues 1-29; the sequence is MTQRPFSLLSHLGRICLAAAMLAALPAQA.

Belongs to the FlgI family. The basal body constitutes a major portion of the flagellar organelle and consists of four rings (L,P,S, and M) mounted on a central rod.

The protein localises to the periplasm. Its subcellular location is the bacterial flagellum basal body. Assembles around the rod to form the L-ring and probably protects the motor/basal body from shearing forces during rotation. This chain is Flagellar P-ring protein, found in Bordetella avium (strain 197N).